The primary structure comprises 248 residues: Probable transcriptional regulator LumQ (248 aa).

Residues 148 to 246 (VLIDNYIEQH…GMSPTRYQFF (99 aa)) form the HTH araC/xylS-type domain. DNA-binding regions (H-T-H motif) lie at residues 165 to 186 (AELSSVAFLAQSQFYALFKSQM) and 213 to 236 (LSQVAQLCGFSSQSSFSQAFRRLY).

Probable transcriptional regulator. Its target gene(s) is not yet known. The chain is Probable transcriptional regulator LumQ (lumQ) from Photobacterium leiognathi.